We begin with the raw amino-acid sequence, 286 residues long: NADPH-dependent 7-cyano-7-deazaguanine reductase (286 aa).

88–90 is a substrate binding site; the sequence is VES. 90–91 provides a ligand contact to NADPH; that stretch reads SK. C194 acts as the Thioimide intermediate in catalysis. Residue D201 is the Proton donor of the active site. A substrate-binding site is contributed by 233–234; it reads HE. 262–263 contacts NADPH; sequence RG.

Belongs to the GTP cyclohydrolase I family. QueF type 2 subfamily. Homodimer.

Its subcellular location is the cytoplasm. The catalysed reaction is 7-aminomethyl-7-carbaguanine + 2 NADP(+) = 7-cyano-7-deazaguanine + 2 NADPH + 3 H(+). Its pathway is tRNA modification; tRNA-queuosine biosynthesis. Its function is as follows. Catalyzes the NADPH-dependent reduction of 7-cyano-7-deazaguanine (preQ0) to 7-aminomethyl-7-deazaguanine (preQ1). This is NADPH-dependent 7-cyano-7-deazaguanine reductase from Colwellia psychrerythraea (strain 34H / ATCC BAA-681) (Vibrio psychroerythus).